The chain runs to 145 residues: Probable flagellum biosynthesis repressor protein FlbT (145 aa).

Belongs to the FlbT family.

Has a post-transcriptional repressor function in flagellum biogenesis. Associates with the 5'-UTR of fljK mRNA and promotes its degradation. This chain is Probable flagellum biosynthesis repressor protein FlbT, found in Chelativorans sp. (strain BNC1).